Reading from the N-terminus, the 97-residue chain is RLPPQQIEKSPWSNKYDPPLEDGAMPSARGCWDSIHVVEVQEKSGSGTMNLGGSLTRQMEKDETVSDCSPHIANIGRLVEDMENKIRSTLNEIYFGK.

Disordered regions lie at residues R1–S27 and K43–S66. Residues K43 to R57 are compositionally biased toward polar residues. At K97 the chain carries N6-acetyllysine.

Belongs to the F-actin-capping protein beta subunit family. Component of the F-actin capping complex, composed of a heterodimer of an alpha and a beta subunit. Subunit of dynactin, a multiprotein complex part of a tripartite complex with dynein and a adapter, such as BICDL1, BICD2 or HOOK3. The dynactin complex is built around ACTR1A/ACTB filament and consists of an actin-related filament composed of a shoulder domain, a pointed end and a barbed end. Its length is defined by its flexible shoulder domain. The soulder is composed of 2 DCTN1 subunits, 4 DCTN2 and 2 DCTN3. The 4 DCNT2 (via N-terminus) bind the ACTR1A filament and act as molecular rulers to determine the length. The pointed end is important for binding dynein-dynactin cargo adapters. Consists of 4 subunits: ACTR10, DCNT4, DCTN5 and DCTN6. The barbed end is composed of a CAPZA1:CAPZB heterodimers, which binds ACTR1A/ACTB filament and dynactin and stabilizes dynactin. Interacts with ARHGAP17. Interaction with RCSD1/CAPZIP. Component of the WASH complex, composed of F-actin-capping protein subunit alpha (CAPZA1, CAPZA2 or CAPZA3), F-actin-capping protein subunit beta (CAPZB), WASH (WASHC1, WASH2P, WASH3P, WASH4P, WASH5P or WASH6P), WASHC2 (WASHC2A or WASHC2C), WASHC3, WASHC4 and WASHC5. Interacts with ACTG1. Directly interacts with CRACD; this interaction decreases binding to actin.

It is found in the cytoplasm. Its subcellular location is the cytoskeleton. The protein localises to the myofibril. The protein resides in the sarcomere. F-actin-capping proteins bind in a Ca(2+)-independent manner to the fast growing ends of actin filaments (barbed end) thereby blocking the exchange of subunits at these ends. Unlike other capping proteins (such as gelsolin and severin), these proteins do not sever actin filaments. Plays a role in the regulation of cell morphology and cytoskeletal organization. Forms, with CAPZB, the barbed end of the fast growing ends of actin filaments in the dynactin complex and stabilizes dynactin structure. The dynactin multiprotein complex activates the molecular motor dynein for ultra-processive transport along microtubules. The polypeptide is F-actin-capping protein subunit beta (Mesocricetus auratus (Golden hamster)).